The primary structure comprises 527 residues: Peptide chain release factor 3 (527 aa).

One can recognise a tr-type G domain in the interval 11 to 278 (AKRRTFAIIS…GFVEWAPPPL (268 aa)). Residues 20 to 27 (SHPDAGKT), 87 to 91 (DTPGH), and 141 to 144 (NKMD) each bind GTP.

This sequence belongs to the TRAFAC class translation factor GTPase superfamily. Classic translation factor GTPase family. PrfC subfamily.

The protein localises to the cytoplasm. Increases the formation of ribosomal termination complexes and stimulates activities of RF-1 and RF-2. It binds guanine nucleotides and has strong preference for UGA stop codons. It may interact directly with the ribosome. The stimulation of RF-1 and RF-2 is significantly reduced by GTP and GDP, but not by GMP. This chain is Peptide chain release factor 3, found in Saccharophagus degradans (strain 2-40 / ATCC 43961 / DSM 17024).